A 357-amino-acid chain; its full sequence is UPF0283 membrane protein BCAN_A1047 (357 aa).

The tract at residues 1–36 (MSDKTPRKPTAFRLEQPARVSAASEQEEPRRPRAVK) is disordered. The segment covering 27–36 (EEPRRPRAVK) has biased composition (basic and acidic residues). 2 helical membrane-spanning segments follow: residues 78–98 (ILFGALGILVSFAIGIWTEDL) and 109–129 (LGWTALGVAMVALAAFAAIIL).

The protein belongs to the UPF0283 family.

The protein resides in the cell inner membrane. The protein is UPF0283 membrane protein BCAN_A1047 of Brucella canis (strain ATCC 23365 / NCTC 10854 / RM-666).